Consider the following 180-residue polypeptide: ATP synthase subunit delta (180 aa).

Belongs to the ATPase delta chain family. F-type ATPases have 2 components, F(1) - the catalytic core - and F(0) - the membrane proton channel. F(1) has five subunits: alpha(3), beta(3), gamma(1), delta(1), epsilon(1). F(0) has three main subunits: a(1), b(2) and c(10-14). The alpha and beta chains form an alternating ring which encloses part of the gamma chain. F(1) is attached to F(0) by a central stalk formed by the gamma and epsilon chains, while a peripheral stalk is formed by the delta and b chains.

The protein localises to the cell inner membrane. Its function is as follows. F(1)F(0) ATP synthase produces ATP from ADP in the presence of a proton or sodium gradient. F-type ATPases consist of two structural domains, F(1) containing the extramembraneous catalytic core and F(0) containing the membrane proton channel, linked together by a central stalk and a peripheral stalk. During catalysis, ATP synthesis in the catalytic domain of F(1) is coupled via a rotary mechanism of the central stalk subunits to proton translocation. Functionally, this protein is part of the stalk that links CF(0) to CF(1). It either transmits conformational changes from CF(0) to CF(1) or is implicated in proton conduction. This Geobacter sp. (strain M21) protein is ATP synthase subunit delta.